The chain runs to 251 residues: tRNA (guanine-N(1)-)-methyltransferase (251 aa).

S-adenosyl-L-methionine contacts are provided by residues Gly-117 and Ile-137 to Leu-142.

Belongs to the RNA methyltransferase TrmD family. As to quaternary structure, homodimer.

It localises to the cytoplasm. It carries out the reaction guanosine(37) in tRNA + S-adenosyl-L-methionine = N(1)-methylguanosine(37) in tRNA + S-adenosyl-L-homocysteine + H(+). Functionally, specifically methylates guanosine-37 in various tRNAs. This Haemophilus ducreyi (strain 35000HP / ATCC 700724) protein is tRNA (guanine-N(1)-)-methyltransferase.